A 374-amino-acid polypeptide reads, in one-letter code: Cyclin-dependent kinase 9 (374 aa).

In terms of domain architecture, Protein kinase spans 19-318 (YEKLAKIGQG…SDDALNHDFF (300 aa)). ATP-binding positions include 25-33 (IGQGTFGEV) and Lys48. The Proton acceptor role is filled by Asp151. The interval 345–374 (PRRRGHMPQQPANQNRNPATTSQSEFDRVF) is disordered. The span at 354-368 (QPANQNRNPATTSQS) shows a compositional bias: polar residues.

Belongs to the protein kinase superfamily. CMGC Ser/Thr protein kinase family. CDC2/CDKX subfamily. In terms of assembly, component of the super elongation complex (SEC). Associates with ccnt1/cyclin-T1, ccnt2/cyclin-T2 or ccnk/cyclin-K to form active P-TEFb.

The protein resides in the nucleus. The protein localises to the cytoplasm. It localises to the PML body. The catalysed reaction is L-seryl-[protein] + ATP = O-phospho-L-seryl-[protein] + ADP + H(+). The enzyme catalyses L-threonyl-[protein] + ATP = O-phospho-L-threonyl-[protein] + ADP + H(+). It carries out the reaction [DNA-directed RNA polymerase] + ATP = phospho-[DNA-directed RNA polymerase] + ADP + H(+). In terms of biological role, protein kinase involved in the regulation of transcription. Member of the cyclin-dependent kinase pair (CDK9/cyclin-T) complex, also called positive transcription elongation factor b (P-TEFb), which facilitates the transition from abortive to productive elongation by phosphorylating the CTD (C-terminal domain) of the large subunit of RNA polymerase II (RNAP II) polr2a, supt5h and rdbp. This complex is inactive when in the 7SK snRNP complex form. Regulates cytokine inducible transcription networks by facilitating promoter recognition of target transcription factors. P-TEFb is also involved in cotranscriptional histone modification, mRNA processing and mRNA export. The polypeptide is Cyclin-dependent kinase 9 (Danio rerio (Zebrafish)).